The sequence spans 75 residues: Small ribosomal subunit protein bS18 (75 aa).

The protein belongs to the bacterial ribosomal protein bS18 family. As to quaternary structure, part of the 30S ribosomal subunit. Forms a tight heterodimer with protein bS6.

Functionally, binds as a heterodimer with protein bS6 to the central domain of the 16S rRNA, where it helps stabilize the platform of the 30S subunit. The protein is Small ribosomal subunit protein bS18 of Baumannia cicadellinicola subsp. Homalodisca coagulata.